The chain runs to 634 residues: Chaperone protein HtpG (634 aa).

Residues 1–342 (MTVETQKETL…SNDLSLNVSR (342 aa)) are a; substrate-binding. The interval 343-559 (EILQKDPIID…EQDLGLQMRQ (217 aa)) is b. A c region spans residues 560–634 (ILEASGQKVP…LNKLLVELSA (75 aa)).

Belongs to the heat shock protein 90 family. As to quaternary structure, homodimer.

It localises to the cytoplasm. Its function is as follows. Molecular chaperone. Has ATPase activity. The sequence is that of Chaperone protein HtpG from Pseudomonas putida (strain ATCC 47054 / DSM 6125 / CFBP 8728 / NCIMB 11950 / KT2440).